Reading from the N-terminus, the 520-residue chain is GMP synthase [glutamine-hydrolyzing] (520 aa).

A Glutamine amidotransferase type-1 domain is found at 12–205 (KIIVLDYGSQ…AISICGARGD (194 aa)). Residue C89 is the Nucleophile of the active site. Active-site residues include H179 and E181. The 190-residue stretch at 206–395 (WSMDNFIDME…LGMPEEIVWR (190 aa)) folds into the GMPS ATP-PPase domain. 233-239 (SGGVDSS) contacts ATP.

As to quaternary structure, homodimer.

It catalyses the reaction XMP + L-glutamine + ATP + H2O = GMP + L-glutamate + AMP + diphosphate + 2 H(+). It participates in purine metabolism; GMP biosynthesis; GMP from XMP (L-Gln route): step 1/1. Its function is as follows. Catalyzes the synthesis of GMP from XMP. The chain is GMP synthase [glutamine-hydrolyzing] from Streptococcus pyogenes serotype M6 (strain ATCC BAA-946 / MGAS10394).